The sequence spans 421 residues: Tol-Pal system protein TolA (421 aa).

Residues 1 to 13 lie on the Cytoplasmic side of the membrane; that stretch reads MSKATEQNDKLKR. A helical membrane pass occupies residues 14–34; the sequence is AIIISAVLHVILFAALIWSSF. Residues 35-421 lie on the Periplasmic side of the membrane; sequence DENIEASAGG…FKNAPLDFKP (387 aa). A domain II (alpha-helical) region spans residues 48–310; it reads SSIDAVMVDS…LSSGKNAPKT (263 aa). The interval 65 to 266 is disordered; that stretch reads KRMQSQESSA…KAAADKKAAA (202 aa). Basic and acidic residues-rich tracts occupy residues 73-175 and 206-266; these read SAKR…EAEA and EARK…KAAA. 13 tandem repeats follow at residues 224–229, 230–234, 235–240, 241–245, 246–250, 251–255, 256–260, 261–266, 267–271, 272–277, 278–282, 283–287, and 288–292. Residues 224–292 are 13 X tandem repeats of [EDA]-K(1,2)-A(2,4); the sequence is EKKAAAEKAA…EKAAAAKAAA (69 aa). Residues 300–336 are disordered; the sequence is ELSSGKNAPKTGGGAKGNNASPAGSGNTKNNGASGAD. Residues 311-421 are domain III (functional); it reads GGGAKGNNAS…FKNAPLDFKP (111 aa). Residues 317-332 show a composition bias toward polar residues; that stretch reads NNASPAGSGNTKNNGA. Cysteine 363 and cysteine 388 are disulfide-bonded.

This sequence belongs to the TolA family. The Tol-Pal system is composed of five core proteins: the inner membrane proteins TolA, TolQ and TolR, the periplasmic protein TolB and the outer membrane protein Pal. They form a network linking the inner and outer membranes and the peptidoglycan layer. TolA interacts with TolQ and TolR via its N-terminal domain. Interacts with CpoB, and with the trimeric porins OmpC, OmpF, PhoE and LamB via its central domain. Interacts with TolB via its C-terminal domain. Also interacts with Pal via its C-terminal domain. This interaction is proton motive force dependent and requires TolQ and TolR.

It localises to the cell inner membrane. In terms of biological role, part of the Tol-Pal system, which plays a role in outer membrane invagination during cell division and is important for maintaining outer membrane integrity. The Tol-Pal system is also required for polar localization of chemoreceptors clusters. The system also appears to be required for the activity of several outer membrane-localized enzymes with cell wall remodeling activity. Is involved in the uptake of group A colicins (colicins A, E1, E2, E3, and K) and in the uptake of filamentous phage DNA. This chain is Tol-Pal system protein TolA, found in Escherichia coli (strain K12).